A 46-amino-acid polypeptide reads, in one-letter code: Large ribosomal subunit protein bL34 (46 aa).

This sequence belongs to the bacterial ribosomal protein bL34 family.

This chain is Large ribosomal subunit protein bL34 (rpmH), found in Mycobacterium avium.